A 414-amino-acid polypeptide reads, in one-letter code: 3-oxo-isoapionate-4-phosphate transcarboxylase/hydrolase (414 aa).

Mg(2+)-binding residues include K180, D182, and E183. Position 180 is an N6-carboxylysine (K180).

It belongs to the RuBisCO large chain family. It depends on Mg(2+) as a cofactor.

The catalysed reaction is 3-oxoisoapionate 4-phosphate + H2O = (2R)-3-phosphoglycerate + glycolate + H(+). Its pathway is carbohydrate metabolism. In terms of biological role, involved in catabolism of D-apiose. Catalyzes the conversion of 3-oxo-isoapionate 4-phosphate to 3-phosphoglycerate and glycolate. The chain is 3-oxo-isoapionate-4-phosphate transcarboxylase/hydrolase from Xanthobacter autotrophicus (strain ATCC BAA-1158 / Py2).